The following is a 384-amino-acid chain: Iron(3+)-hydroxamate import system permease protein FhuB (384 aa).

9 helical membrane passes run 58–78 (GAVI…FLSI), 115–135 (TAAA…MQGM), 154–174 (FAVS…LVLW), 176–196 (FAGA…SRGG), 202–222 (LALA…AIAI), 243–263 (WSGV…AFFI), 296–316 (VILT…GLII), 330–350 (WIIP…DIAA), and 357–377 (FETP…FYLA).

The protein belongs to the binding-protein-dependent transport system permease family. FecCD subfamily. In terms of assembly, the complex is composed of an ATP-binding protein (FhuC), two transmembrane proteins (FhuB and FhuG) and a solute-binding protein (FhuD or YxeB).

The protein localises to the cell membrane. It is found in the membrane raft. Part of the ABC transporter complex FhuBGCD involved in iron(3+)-hydroxamate import. Responsible for the translocation of the substrate across the membrane. The protein is Iron(3+)-hydroxamate import system permease protein FhuB (fhuB) of Bacillus subtilis (strain 168).